We begin with the raw amino-acid sequence, 707 residues long: Protein O-mannosyl-transferase TMEM260 (707 aa).

8 helical membrane passes run 28–48, 71–91, 94–114, 141–161, 189–209, 222–242, 318–338, and 356–376; these read GGVA…PPSV, YPLF…GSIA, VNLL…FTVF, IAAE…ALTV, NQHT…FQLL, LSLY…SSYL, NPSL…FFAW, and FWMQ…AAVV. Over 377–707 the chain is Lumenal; it reads SETNRVLNSN…LQSLRNRKNV (331 aa). N-linked (GlcNAc...) asparagine glycosylation is found at Asn-407, Asn-535, and Asn-568.

The protein belongs to the glycosyltransferase 117 (GT117) family. Expressed in brain, heart, kidney, liver, lung, pancreas and placenta but are not detected in skeletal muscle.

It localises to the endoplasmic reticulum membrane. Its subcellular location is the membrane. The catalysed reaction is a di-trans,poly-cis-dolichyl beta-D-mannosyl phosphate + L-seryl-[protein] = 3-O-(alpha-D-mannosyl)-L-seryl-[protein] + a di-trans,poly-cis-dolichyl phosphate + H(+). It carries out the reaction a di-trans,poly-cis-dolichyl beta-D-mannosyl phosphate + L-threonyl-[protein] = 3-O-(alpha-D-mannosyl)-L-threonyl-[protein] + a di-trans,poly-cis-dolichyl phosphate + H(+). In terms of biological role, O-mannosyl-transferase that transfers mannosyl residues to the hydroxyl group of serine or threonine residues of proteins. Specifically glycosylates the IPT/TIG domain of target proteins, such as MET and MST1R/RON. TMEM260-mediated O-mannosylated residues are composed of single mannose glycans that are not elongated or modified. This is Protein O-mannosyl-transferase TMEM260 from Homo sapiens (Human).